Reading from the N-terminus, the 679-residue chain is Protein hook (679 aa).

The 119-residue stretch at 5–123 folds into the Calponin-homology (CH) domain; it reads NGMYYSLLEW…RLLQLVLGCA (119 aa). Residues 140–627 are a coiled coil; sequence EEELQANIMR…SKTKMSTMEE (488 aa).

It belongs to the hook family. Homodimer. Interacts with microtubules via its N-terminus.

It localises to the cytoplasm. It is found in the cytoskeleton. The protein resides in the endosome. The protein localises to the synapse. Its function is as follows. Involved in endocytic trafficking by stabilizing organelles of the endocytic pathway. Probably acts as a cytoskeletal linker protein required to tether endosome vesicles to the cytoskeleton. Involved in modulation of endocytosis at stages required for down-regulation of membrane proteins that control synapse size. Not involved in synaptic vesicle recycling. Required in R7 cells for boss endocytosis into multivesicular bodies (MVBs). Has a role in regulating adult longevity. In Drosophila mojavensis (Fruit fly), this protein is Protein hook.